A 322-amino-acid chain; its full sequence is Acetyl-coenzyme A carboxylase carboxyl transferase subunit alpha (322 aa).

The CoA carboxyltransferase C-terminal domain maps to 30–293 (AVDISAEILR…KKALQDSLKL (264 aa)).

Belongs to the AccA family. In terms of assembly, acetyl-CoA carboxylase is a heterohexamer composed of biotin carboxyl carrier protein (AccB), biotin carboxylase (AccC) and two subunits each of ACCase subunit alpha (AccA) and ACCase subunit beta (AccD).

Its subcellular location is the cytoplasm. It carries out the reaction N(6)-carboxybiotinyl-L-lysyl-[protein] + acetyl-CoA = N(6)-biotinyl-L-lysyl-[protein] + malonyl-CoA. The protein operates within lipid metabolism; malonyl-CoA biosynthesis; malonyl-CoA from acetyl-CoA: step 1/1. In terms of biological role, component of the acetyl coenzyme A carboxylase (ACC) complex. First, biotin carboxylase catalyzes the carboxylation of biotin on its carrier protein (BCCP) and then the CO(2) group is transferred by the carboxyltransferase to acetyl-CoA to form malonyl-CoA. In Nitrosospira multiformis (strain ATCC 25196 / NCIMB 11849 / C 71), this protein is Acetyl-coenzyme A carboxylase carboxyl transferase subunit alpha.